Reading from the N-terminus, the 242-residue chain is Purine nucleoside phosphorylase SCO2081 (242 aa).

Positions 68, 106, and 123 each coordinate Zn(2+).

It belongs to the purine nucleoside phosphorylase YfiH/LACC1 family. Homodimer. Cu(2+) is required as a cofactor. Zn(2+) serves as cofactor.

The enzyme catalyses adenosine + phosphate = alpha-D-ribose 1-phosphate + adenine. It catalyses the reaction S-methyl-5'-thioadenosine + phosphate = 5-(methylsulfanyl)-alpha-D-ribose 1-phosphate + adenine. The catalysed reaction is inosine + phosphate = alpha-D-ribose 1-phosphate + hypoxanthine. It carries out the reaction adenosine + H2O + H(+) = inosine + NH4(+). Purine nucleoside enzyme that catalyzes the phosphorolysis of adenosine and inosine nucleosides, yielding D-ribose 1-phosphate and the respective free bases, adenine and hypoxanthine. Also catalyzes the phosphorolysis of S-methyl-5'-thioadenosine into adenine and S-methyl-5-thio-alpha-D-ribose 1-phosphate. Also has adenosine deaminase activity. The polypeptide is Purine nucleoside phosphorylase SCO2081 (Streptomyces coelicolor (strain ATCC BAA-471 / A3(2) / M145)).